The sequence spans 413 residues: MSTDPTSKPAFPITDEVRHALAVTKRGVDELLIEEEFAQKLAKSAATGKPLRIKLGLDPTAPDIHLGHTVVLNKMRQLQDLGHTVIFLIGDFTSLIGDPSGRNATRPPLTREQIESNAKTYFEQAALVLDREKTEIRYNSEWSMPLGADGMIKLASRYTVARMLEREDFTKRFQGGIPISIHEFLYPLMQGYDSVALNADLELGGTDQKFNLLVGRELQKQYGQEQQCILTMPLLEGLDGVEKMSKSKGNYVGISEKPTDMFGKLMSISDVLMWRYFELLSFRSLDEIARFRGEAEGGRNPRDFKVMLAQEIVARFHSQADAERALEDFNHRAKGGVPDDIPAVTLAGAPLAIGQLLKQAGLVPSTSEALRNIEQGGVKIDGATVSDKALKVDAGEFVVQVGKRRFARVTLTA.

The 'HIGH' region motif lies at 59–68 (PTAPDIHLGH). Positions 243 to 247 (KMSKS) match the 'KMSKS' region motif. K246 contributes to the ATP binding site. The region spanning 351–411 (LAIGQLLKQA…GKRRFARVTL (61 aa)) is the S4 RNA-binding domain.

The protein belongs to the class-I aminoacyl-tRNA synthetase family. TyrS type 2 subfamily. In terms of assembly, homodimer.

The protein localises to the cytoplasm. The catalysed reaction is tRNA(Tyr) + L-tyrosine + ATP = L-tyrosyl-tRNA(Tyr) + AMP + diphosphate + H(+). Functionally, catalyzes the attachment of tyrosine to tRNA(Tyr) in a two-step reaction: tyrosine is first activated by ATP to form Tyr-AMP and then transferred to the acceptor end of tRNA(Tyr). The chain is Tyrosine--tRNA ligase from Burkholderia mallei (strain ATCC 23344).